The primary structure comprises 388 residues: Chalcone synthase DIV (388 aa).

Residue cysteine 164 is part of the active site.

Belongs to the thiolase-like superfamily. Chalcone/stilbene synthases family.

It catalyses the reaction (E)-4-coumaroyl-CoA + 3 malonyl-CoA + 3 H(+) = 2',4,4',6'-tetrahydroxychalcone + 3 CO2 + 4 CoA. It functions in the pathway secondary metabolite biosynthesis; flavonoid biosynthesis. Functionally, the primary product of this enzyme is 4,2',4',6'-tetrahydroxychalcone (also termed naringenin-chalcone or chalcone) which can under specific conditions spontaneously isomerize into naringenin. The chain is Chalcone synthase DIV (CHS-DIV) from Ipomoea batatas (Sweet potato).